Reading from the N-terminus, the 118-residue chain is Ribosome-binding factor A (118 aa).

It belongs to the RbfA family. As to quaternary structure, monomer. Binds 30S ribosomal subunits, but not 50S ribosomal subunits or 70S ribosomes.

It is found in the cytoplasm. Its function is as follows. One of several proteins that assist in the late maturation steps of the functional core of the 30S ribosomal subunit. Associates with free 30S ribosomal subunits (but not with 30S subunits that are part of 70S ribosomes or polysomes). Required for efficient processing of 16S rRNA. May interact with the 5'-terminal helix region of 16S rRNA. In Geobacter sulfurreducens (strain ATCC 51573 / DSM 12127 / PCA), this protein is Ribosome-binding factor A.